We begin with the raw amino-acid sequence, 223 residues long: Peptidyl-tRNA hydrolase (223 aa).

Tyr14 is a tRNA binding site. His19 serves as the catalytic Proton acceptor. TRNA contacts are provided by Tyr64, Asn66, and Asn112. The disordered stretch occupies residues 183–223 (MNVRNTRPKPGKRQKGEGDGSTDPAPAAKEGKGPLPPTQKP).

This sequence belongs to the PTH family. Monomer.

Its subcellular location is the cytoplasm. The catalysed reaction is an N-acyl-L-alpha-aminoacyl-tRNA + H2O = an N-acyl-L-amino acid + a tRNA + H(+). Functionally, hydrolyzes ribosome-free peptidyl-tRNAs (with 1 or more amino acids incorporated), which drop off the ribosome during protein synthesis, or as a result of ribosome stalling. Its function is as follows. Catalyzes the release of premature peptidyl moieties from peptidyl-tRNA molecules trapped in stalled 50S ribosomal subunits, and thus maintains levels of free tRNAs and 50S ribosomes. In Sorangium cellulosum (strain So ce56) (Polyangium cellulosum (strain So ce56)), this protein is Peptidyl-tRNA hydrolase.